The following is a 180-amino-acid chain: Regulator of G-protein signaling 8 (180 aa).

Ser26 bears the Phosphoserine mark. The region spanning 56 to 171 is the RGS domain; the sequence is SFDVLLSHKY…FLRSKMYLDL (116 aa).

In terms of assembly, interacts with GNAO1 and GNAI3. As to expression, expressed at high levels in brain. Very little expression detected in other tissues. Detected in Purkinje cells in the cerebellum.

The protein localises to the cell membrane. It is found in the membrane. It localises to the perikaryon. Its subcellular location is the cell projection. The protein resides in the dendrite. The protein localises to the nucleus. Functionally, regulates G protein-coupled receptor signaling cascades, including signaling via muscarinic acetylcholine receptor CHRM2 and dopamine receptor DRD2. Inhibits signal transduction by increasing the GTPase activity of G protein alpha subunits, thereby driving them into their inactive GDP-bound form. Modulates the activity of potassium channels that are activated in response to DRD2 and CHRM2 signaling. This Rattus norvegicus (Rat) protein is Regulator of G-protein signaling 8 (Rgs8).